Here is a 100-residue protein sequence, read N- to C-terminus: MLVLVFLIGLSACFYVYYKVKGVRAKPSLAKEICSAKSSMALGSLVLFYGLNQMILFHSVLTLVIGGIFIVIGAGSAWAGYKAFRHYNPLHAKEAERDHA.

2 consecutive transmembrane segments (helical) span residues 1–21 (MLVLVFLIGLSACFYVYYKVK) and 54–74 (MILFHSVLTLVIGGIFIVIGA).

Its subcellular location is the cell membrane. This is an uncharacterized protein from Bacillus subtilis (strain 168).